A 265-amino-acid polypeptide reads, in one-letter code: Flap endonuclease Xni (265 aa).

A Mg(2+)-binding site is contributed by Asp-111. Residues 167 to 260 (VVPAQLVDFW…NLREIRYPPA (94 aa)) form the 5'-3' exonuclease domain. The K(+) site is built by Leu-178, Val-189, and Ile-192. Residues 191–196 (GIGPKT) form an interaction with DNA region.

The protein belongs to the Xni family. It depends on Mg(2+) as a cofactor. K(+) is required as a cofactor.

Functionally, has flap endonuclease activity. During DNA replication, flap endonucleases cleave the 5'-overhanging flap structure that is generated by displacement synthesis when DNA polymerase encounters the 5'-end of a downstream Okazaki fragment. The chain is Flap endonuclease Xni from Aeromonas salmonicida (strain A449).